Consider the following 172-residue polypeptide: Trypsin inhibitor 1A (172 aa).

2 disulfide bridges follow: Cys40–Cys84 and Cys133–Cys139.

Belongs to the protease inhibitor I3 (leguminous Kunitz-type inhibitor) family.

Its function is as follows. WTI-1B inhibits trypsin stoichiometrically. The polypeptide is Trypsin inhibitor 1A (Psophocarpus tetragonolobus (Winged bean)).